The chain runs to 150 residues: UPF0178 protein PputW619_5044 (150 aa).

The protein belongs to the UPF0178 family.

The polypeptide is UPF0178 protein PputW619_5044 (Pseudomonas putida (strain W619)).